A 399-amino-acid polypeptide reads, in one-letter code: Glutamyl-tRNA reductase (399 aa).

Substrate-binding positions include 45–48 (TCNR), serine 101, 106–108 (EDQ), and glutamine 112. The active-site Nucleophile is the cysteine 46. Position 177–182 (177–182 (GFGKIG)) interacts with NADP(+).

This sequence belongs to the glutamyl-tRNA reductase family. As to quaternary structure, homodimer.

It carries out the reaction (S)-4-amino-5-oxopentanoate + tRNA(Glu) + NADP(+) = L-glutamyl-tRNA(Glu) + NADPH + H(+). It participates in porphyrin-containing compound metabolism; protoporphyrin-IX biosynthesis; 5-aminolevulinate from L-glutamyl-tRNA(Glu): step 1/2. In terms of biological role, catalyzes the NADPH-dependent reduction of glutamyl-tRNA(Glu) to glutamate 1-semialdehyde (GSA). In Clostridium kluyveri (strain ATCC 8527 / DSM 555 / NBRC 12016 / NCIMB 10680 / K1), this protein is Glutamyl-tRNA reductase.